Consider the following 294-residue polypeptide: Small ribosomal subunit protein uS2 (294 aa).

The span at 261-274 shows a compositional bias: basic and acidic residues; that stretch reads MDEDADSKKSKAEE. The interval 261 to 294 is disordered; that stretch reads MDEDADSKKSKAEEPVIPTAEEPAITTIEVDQNE.

Belongs to the universal ribosomal protein uS2 family.

The chain is Small ribosomal subunit protein uS2 from Leptospira borgpetersenii serovar Hardjo-bovis (strain JB197).